The chain runs to 429 residues: Adenylosuccinate synthetase (429 aa).

GTP-binding positions include 12-18 and 40-42; these read GDEGKGK and GHT. Asp-13 functions as the Proton acceptor in the catalytic mechanism. Residues Asp-13 and Gly-40 each contribute to the Mg(2+) site. Residues 13–16, 38–41, Thr-129, Arg-143, Gln-223, Thr-238, and Arg-302 each bind IMP; these read DEGK and NAGH. The Proton donor role is filled by His-41. Residue 298-304 participates in substrate binding; sequence TVTGRAR. Residues Arg-304, 330–332, and 412–414 each bind GTP; these read KLD and STS.

Belongs to the adenylosuccinate synthetase family. In terms of assembly, homodimer. Mg(2+) serves as cofactor.

It localises to the cytoplasm. The enzyme catalyses IMP + L-aspartate + GTP = N(6)-(1,2-dicarboxyethyl)-AMP + GDP + phosphate + 2 H(+). It participates in purine metabolism; AMP biosynthesis via de novo pathway; AMP from IMP: step 1/2. In terms of biological role, plays an important role in the de novo pathway of purine nucleotide biosynthesis. Catalyzes the first committed step in the biosynthesis of AMP from IMP. The polypeptide is Adenylosuccinate synthetase (Acidiphilium cryptum (strain JF-5)).